Consider the following 144-residue polypeptide: Translation initiation factor 5A (144 aa).

A Hypusine modification is found at K38.

Belongs to the eIF-5A family.

The protein localises to the cytoplasm. In terms of biological role, functions by promoting the formation of the first peptide bond. This Nanoarchaeum equitans (strain Kin4-M) protein is Translation initiation factor 5A.